A 64-amino-acid chain; its full sequence is Large ribosomal subunit protein bL35 (64 aa).

The protein belongs to the bacterial ribosomal protein bL35 family.

This Vibrio metschnikovii protein is Large ribosomal subunit protein bL35.